Consider the following 710-residue polypeptide: DNA-directed RNA polymerase III subunit RPC5 (710 aa).

The segment covering 146 to 155 (DAKHREREAA) has biased composition (basic and acidic residues). The interval 146–169 (DAKHREREAANEAGDSSQDEAEED) is disordered. Residues Ser161 and Ser162 each carry the phosphoserine modification. Lys171 participates in a covalent cross-link: Glycyl lysine isopeptide (Lys-Gly) (interchain with G-Cter in SUMO2). Ser192 carries the post-translational modification Phosphoserine. The residue at position 224 (Tyr224) is a Phosphotyrosine. Lys432 is covalently cross-linked (Glycyl lysine isopeptide (Lys-Gly) (interchain with G-Cter in SUMO2)). Lys498 is covalently cross-linked (Glycyl lysine isopeptide (Lys-Gly) (interchain with G-Cter in SUMO1); alternate). A Glycyl lysine isopeptide (Lys-Gly) (interchain with G-Cter in SUMO2); alternate cross-link involves residue Lys498. The interval 498 to 526 (KEEPLSEEEADGAELEAEEEEPMDTAPST) is disordered. A compositionally biased stretch (acidic residues) spans 502–520 (LSEEEADGAELEAEEEEPM). Ser503 bears the Phosphoserine mark. The interval 558–710 (NPVACELKAF…MWYLKGTVQS (153 aa)) is required for Pol III complex stability. A Glycyl lysine isopeptide (Lys-Gly) (interchain with G-Cter in SUMO2) cross-link involves residue Lys661.

In terms of assembly, component of the RNA polymerase III complex consisting of at least 17 subunits: a ten-subunit horseshoe-shaped catalytic core composed of POLR3A/RPC1, POLR3B/RPC2, POLR1C/RPAC1, POLR1D/RPAC2, POLR3K/RPC10, POLR2E/RPABC1, POLR2F/RPABC2, POLR2H/RPABC3, POLR2K/RPABC4 and POLR2L/RPABC5; the stalk composed of two subunits POLR3H/RPC8 and CRCP/RPC9, forming a structural mobile part that protrudes out of the core and functions primarily in transcription initiation; and additional subunits homologous to general transcription factors of the RNA polymerase II machinery, POLR3D/RPC4-POLR3E/RPC5 heterodimer and POLR3/CRPC3-POLR3F/RPC6-POLR3G/RPC7 heterotrimer.

It localises to the nucleus. DNA-dependent RNA polymerase catalyzes the transcription of DNA into RNA using the four ribonucleoside triphosphates as substrates. Specific peripheric component of RNA polymerase III (Pol III) which synthesizes small non-coding RNAs including 5S rRNA, snRNAs, tRNAs and miRNAs from at least 500 distinct genomic loci. Assembles with POLR3D/RPC4 forming a subcomplex that binds the Pol III core. Enables recruitment of Pol III at transcription initiation site and drives transcription initiation from both type 2 and type 3 DNA promoters. Required for efficient transcription termination and reinitiation. Plays a key role in sensing and limiting infection by intracellular bacteria and DNA viruses. Acts as a nuclear and cytosolic DNA sensor involved in innate immune response. Can sense non-self dsDNA that serves as template for transcription into dsRNA. The non-self RNA polymerase III transcripts, such as Epstein-Barr virus-encoded RNAs (EBERs) induce type I interferon and NF-kappa-B through the RIG-I pathway. The chain is DNA-directed RNA polymerase III subunit RPC5 from Mus musculus (Mouse).